Consider the following 526-residue polypeptide: tRNA (guanine(26)-N(2))-dimethyltransferase (526 aa).

Over residues 1 to 10 (MTENVNSSGD) the composition is skewed to polar residues. Residues 1-20 (MTENVNSSGDSAIKSEDKEE) form a disordered region. Residues 22 to 441 (TVIQEGQAKV…APMHLLWDIY (420 aa)) form the Trm1 methyltransferase domain. Residues R47, R104, and D122 each coordinate S-adenosyl-L-methionine. 4 residues coordinate Zn(2+): C286, C289, C325, and C328. The interval 498–526 (KGKNWGPRQKAKGSVNSTKAGFQLTEHKE) is disordered.

It belongs to the class I-like SAM-binding methyltransferase superfamily. Trm1 family.

The enzyme catalyses guanosine(26) in tRNA + 2 S-adenosyl-L-methionine = N(2)-dimethylguanosine(26) in tRNA + 2 S-adenosyl-L-homocysteine + 2 H(+). Functionally, dimethylates a single guanine residue at position 26 of most tRNAs using S-adenosyl-L-methionine as donor of the methyl groups. The chain is tRNA (guanine(26)-N(2))-dimethyltransferase (trm-1) from Caenorhabditis elegans.